Reading from the N-terminus, the 66-residue chain is Alpha-conotoxin GIB (66 aa).

Positions methionine 1 to serine 21 are cleaved as a signal peptide. A propeptide spanning residues phenylalanine 22–lysine 49 is cleaved from the precursor. Intrachain disulfides connect cysteine 51-cysteine 56 and cysteine 52-cysteine 62. Residue glycine 64 is modified to Glycine amide.

This sequence belongs to the conotoxin A superfamily. Expressed by the venom duct.

It is found in the secreted. Alpha-conotoxins act on postsynaptic membranes, they bind to the nicotinic acetylcholine receptors (nAChR) and thus inhibit them. Both the globular (with C1-C3; C2-C4 disulfide pattern) and ribbon (C1-C4; C2-C3) isomers reversibly inhibit human muscle-type alpha-1-beta-1-delta-epsilon/CHRNA1-CHRNB1-CHRND-CHRNE nAChRs (IC(50)=116 nM and IC(50)=643 nM, respectively). Both isomers also inhibit alpha-7/CHRNA7 and alpha-9-alpha-10/CHRNA9-CHRNA10 (IC(50)=1113 nM by globular isomer) nAChRs. The chain is Alpha-conotoxin GIB from Conus geographus (Geography cone).